We begin with the raw amino-acid sequence, 874 residues long: Alanine--tRNA ligase (874 aa).

4 residues coordinate Zn(2+): His564, His568, Cys665, and His669.

Belongs to the class-II aminoacyl-tRNA synthetase family. Requires Zn(2+) as cofactor.

It is found in the cytoplasm. The enzyme catalyses tRNA(Ala) + L-alanine + ATP = L-alanyl-tRNA(Ala) + AMP + diphosphate. Catalyzes the attachment of alanine to tRNA(Ala) in a two-step reaction: alanine is first activated by ATP to form Ala-AMP and then transferred to the acceptor end of tRNA(Ala). Also edits incorrectly charged Ser-tRNA(Ala) and Gly-tRNA(Ala) via its editing domain. This Burkholderia cenocepacia (strain HI2424) protein is Alanine--tRNA ligase.